Reading from the N-terminus, the 371-residue chain is Glutamate 5-kinase (371 aa).

Lysine 14 is an ATP binding site. Residues serine 52, aspartate 139, and asparagine 151 each coordinate substrate. Position 171 to 172 (171 to 172 (SD)) interacts with ATP. Positions 275–353 (EGRLHLDSGA…ADLAMELGPS (79 aa)) constitute a PUA domain.

The protein belongs to the glutamate 5-kinase family.

The protein localises to the cytoplasm. It catalyses the reaction L-glutamate + ATP = L-glutamyl 5-phosphate + ADP. It functions in the pathway amino-acid biosynthesis; L-proline biosynthesis; L-glutamate 5-semialdehyde from L-glutamate: step 1/2. Its function is as follows. Catalyzes the transfer of a phosphate group to glutamate to form L-glutamate 5-phosphate. The chain is Glutamate 5-kinase from Frankia casuarinae (strain DSM 45818 / CECT 9043 / HFP020203 / CcI3).